Reading from the N-terminus, the 572-residue chain is Proline--tRNA ligase (572 aa).

Belongs to the class-II aminoacyl-tRNA synthetase family. ProS type 1 subfamily. In terms of assembly, homodimer.

The protein resides in the cytoplasm. The enzyme catalyses tRNA(Pro) + L-proline + ATP = L-prolyl-tRNA(Pro) + AMP + diphosphate. Its function is as follows. Catalyzes the attachment of proline to tRNA(Pro) in a two-step reaction: proline is first activated by ATP to form Pro-AMP and then transferred to the acceptor end of tRNA(Pro). As ProRS can inadvertently accommodate and process non-cognate amino acids such as alanine and cysteine, to avoid such errors it has two additional distinct editing activities against alanine. One activity is designated as 'pretransfer' editing and involves the tRNA(Pro)-independent hydrolysis of activated Ala-AMP. The other activity is designated 'posttransfer' editing and involves deacylation of mischarged Ala-tRNA(Pro). The misacylated Cys-tRNA(Pro) is not edited by ProRS. This is Proline--tRNA ligase from Psychrobacter arcticus (strain DSM 17307 / VKM B-2377 / 273-4).